The primary structure comprises 373 residues: Muscleblind-like protein 2 (373 aa).

C3H1-type zinc fingers lie at residues 13 to 41, 47 to 73, 176 to 204, and 212 to 238; these read WLTL…HPPK, NGRV…HPPT, TDKL…HPAD, and DNTV…HPPA.

This sequence belongs to the muscleblind family. As to quaternary structure, interacts with ITGA3. Expressed in heart, brain, placenta, lung, liver, skeletal muscle, kidney and pancreas.

It is found in the nucleus. Its subcellular location is the cytoplasm. Its function is as follows. Mediates pre-mRNA alternative splicing regulation. Acts either as activator or repressor of splicing on specific pre-mRNA targets. Inhibits cardiac troponin-T (TNNT2) pre-mRNA exon inclusion but induces insulin receptor (IR) pre-mRNA exon inclusion in muscle. Antagonizes the alternative splicing activity pattern of CELF proteins. RNA-binding protein that binds to 5'ACACCC-3' core sequence, termed zipcode, within the 3'UTR of ITGA3. Binds to CUG triplet repeat expansion in myotonic dystrophy muscle cells by sequestering the target RNAs. Together with RNA binding proteins RBPMS and RBFOX2, activates vascular smooth muscle cells alternative splicing events. Regulates NCOR2 alternative splicing. Seems to regulate expression and localization of ITGA3 by transporting it from the nucleus to cytoplasm at adhesion plaques. May play a role in myotonic dystrophy pathophysiology (DM). In Homo sapiens (Human), this protein is Muscleblind-like protein 2 (MBNL2).